The primary structure comprises 211 residues: FMN-dependent NADH:quinone oxidoreductase 2 (211 aa).

FMN-binding positions include serine 10 and 17 to 19; that span reads SRS.

This sequence belongs to the azoreductase type 1 family. As to quaternary structure, homodimer. FMN serves as cofactor.

It carries out the reaction 2 a quinone + NADH + H(+) = 2 a 1,4-benzosemiquinone + NAD(+). It catalyses the reaction N,N-dimethyl-1,4-phenylenediamine + anthranilate + 2 NAD(+) = 2-(4-dimethylaminophenyl)diazenylbenzoate + 2 NADH + 2 H(+). In terms of biological role, quinone reductase that provides resistance to thiol-specific stress caused by electrophilic quinones. Also exhibits azoreductase activity. Catalyzes the reductive cleavage of the azo bond in aromatic azo compounds to the corresponding amines. The chain is FMN-dependent NADH:quinone oxidoreductase 2 from Listeria monocytogenes serotype 4b (strain F2365).